The sequence spans 367 residues: Succinyl-diaminopimelate desuccinylase (367 aa).

His-64 is a Zn(2+) binding site. Residue Asp-66 is part of the active site. Asp-95 is a binding site for Zn(2+). Glu-125 functions as the Proton acceptor in the catalytic mechanism. Zn(2+) contacts are provided by Glu-126, Glu-154, and His-339.

It belongs to the peptidase M20A family. DapE subfamily. In terms of assembly, homodimer. Requires Zn(2+) as cofactor. Co(2+) serves as cofactor.

The enzyme catalyses N-succinyl-(2S,6S)-2,6-diaminopimelate + H2O = (2S,6S)-2,6-diaminopimelate + succinate. It functions in the pathway amino-acid biosynthesis; L-lysine biosynthesis via DAP pathway; LL-2,6-diaminopimelate from (S)-tetrahydrodipicolinate (succinylase route): step 3/3. Functionally, catalyzes the hydrolysis of N-succinyl-L,L-diaminopimelic acid (SDAP), forming succinate and LL-2,6-diaminopimelate (DAP), an intermediate involved in the bacterial biosynthesis of lysine and meso-diaminopimelic acid, an essential component of bacterial cell walls. The chain is Succinyl-diaminopimelate desuccinylase from Sulfurovum sp. (strain NBC37-1).